The chain runs to 233 residues: Probable transglycosylase IsaA (233 aa).

Positions 1-29 (MKKTIMASSLAVALGVTGYAASTGHEAHA) are cleaved as a signal peptide.

This sequence belongs to the transglycosylase family. IsaA subfamily.

The protein localises to the secreted. Its function is as follows. Is able to cleave peptidoglycan. This Staphylococcus aureus (strain bovine RF122 / ET3-1) protein is Probable transglycosylase IsaA (isaA).